The sequence spans 267 residues: Translation initiation factor 2 subunit alpha (267 aa).

An S1 motif domain is found at 12–83; that stretch reads GELVVATVKE…RKKQVDVSLK (72 aa).

The protein belongs to the eIF-2-alpha family. As to quaternary structure, heterotrimer composed of an alpha, a beta and a gamma chain.

In terms of biological role, eIF-2 functions in the early steps of protein synthesis by forming a ternary complex with GTP and initiator tRNA. This Hyperthermus butylicus (strain DSM 5456 / JCM 9403 / PLM1-5) protein is Translation initiation factor 2 subunit alpha.